The primary structure comprises 157 residues: Transcriptional repressor NrdR (157 aa).

A zinc finger spans residues 3–34 (CPSCQNTDSRVLESRSADAGKCVRRRRECLNC). Residues 49 to 139 (VTVIKRSNAK…VYRQFNGIED (91 aa)) enclose the ATP-cone domain.

Belongs to the NrdR family. Zn(2+) is required as a cofactor.

Its function is as follows. Negatively regulates transcription of bacterial ribonucleotide reductase nrd genes and operons by binding to NrdR-boxes. This Prochlorococcus marinus (strain SARG / CCMP1375 / SS120) protein is Transcriptional repressor NrdR.